Reading from the N-terminus, the 412-residue chain is Odorant receptor 47b (412 aa).

Topologically, residues 1–74 (MNDSGYQSNL…NLFIMCNVMT (74 aa)) are cytoplasmic. Residues 75-95 (IFWTMFVALPESKNVIEMGDD) form a helical membrane-spanning segment. Residues 96 to 103 (LVWISGMA) are Extracellular-facing. A helical transmembrane segment spans residues 104–124 (LVFTKIFYMHLRCDEIDELIS). The Cytoplasmic portion of the chain corresponds to 125–169 (DFEYYNRELRPHNIDEEVLGWQRLCYVIESGLYINCFCLVNFFSA). Residues 170-190 (AIFLQPLLGEGKLPFHSVYPF) form a helical membrane-spanning segment. Residues 191–229 (QWHRLDLHPYTFWFLYIWQSLTSQHNLMSILMVDMVGIS) lie on the Extracellular side of the membrane. The helical transmembrane segment at 230–250 (TFLQTALNLKLLCIEIRKLGD) threads the bilayer. Topologically, residues 251-302 (MEVSDKRFHEEFCRVVRFHQHIIKLVGKANRAFNGAFNAQLMASFSLISIST) are cytoplasmic. A helical membrane pass occupies residues 303 to 323 (FETMAAAAVDPKMAAKFVLLM). Over 324-330 (LVAFIQL) the chain is Extracellular. The helical transmembrane segment at 331-351 (SLWCVSGTLVYTQSVEVAQAA) threads the bilayer. The Cytoplasmic segment spans residues 352-389 (FDINDWHTKSPGIQRDISFVILRAQKPLMYVAEPFLPF). Residues 390 to 410 (TLGTYMLVLKNCYRLLALMQE) form a helical membrane-spanning segment. The Extracellular segment spans residues 411–412 (SM).

This sequence belongs to the insect chemoreceptor superfamily. Heteromeric odorant receptor channel (TC 1.A.69) family. Or49a subfamily. In terms of assembly, interacts with Orco. Complexes exist early in the endomembrane system in olfactory sensory neurons (OSNs), coupling these complexes to the conserved ciliary trafficking pathway. Expressed in olfactory sensory neurons in the antenna.

Its subcellular location is the cell membrane. In terms of biological role, odorant receptor which mediates acceptance or avoidance behavior, depending on its substrates. The odorant receptor repertoire encodes a large collection of odor stimuli that vary widely in identity, intensity, and duration. May form a complex with Orco to form odorant-sensing units, providing sensitive and prolonged odorant signaling and calcium permeability. Plays an important role in sociosexual interactions since its enhances courtship in a pheromone-dependent manner. This Drosophila melanogaster (Fruit fly) protein is Odorant receptor 47b (Or47b).